We begin with the raw amino-acid sequence, 1010 residues long: Signal peptide, CUB and EGF-like domain-containing protein 2 (1010 aa).

An N-terminal signal peptide occupies residues 1–24 (MGAVWTVRLLCLFLLLLNTRQSAA). Residues 28–68 (NTDQCAEGSDACHIDAICQNTPTSYKCTCKTGFKGDGKHCE) enclose the EGF-like 1; calcium-binding domain. Disulfide bonds link C32–C45, C39–C54, C56–C67, C73–C85, C81–C94, C96–C109, C115–C126, and C122–C135. An EGF-like 2; calcium-binding domain is found at 69-110 (DIDECDVEYNGGCVHECNNIPGNYRCTCLDGFHLAHDGHNCL). The region spanning 111 to 147 (DVDECVFNNGGCQHVCVNTMGSYECRCKQGFFLSDNQ) is the EGF-like 3; calcium-binding domain. 2 consecutive EGF-like domains span residues 160-196 (CMNK…QRGC) and 200-235 (CNHG…GRTC). N249 is a glycosylation site (N-linked (GlcNAc...) asparagine). The region spanning 269–304 (CAVNNGGCDSTCKDTSTGVRCSCPVGFTLQPDGKSC) is the EGF-like 6 domain. In terms of domain architecture, EGF-like 7; calcium-binding spans 306-346 (DIDECELHNGGCDHYCRNTIGSFECSCRKGFKLLTDERSCQ). 9 disulfide bridges follow: C310–C321, C317–C330, C332–C345, C351–C361, C357–C370, C372–C384, C390–C401, C397–C410, and C412–C425. The EGF-like 8; calcium-binding domain occupies 347-385 (DIDECFFERTCDHTCVNSPGSFQCVCNKGYTLYGLAHCG). The EGF-like 9; calcium-binding domain occupies 386–426 (DINECSFNNGGCEHTCENTMGSFGCHCRAGYKLHWNKKDCI). Residues N488, N703, N774, and N803 are each glycosylated (N-linked (GlcNAc...) asparagine). Residues C822 and C848 are joined by a disulfide bond. Positions 822 to 934 (CGGELGEFTG…KGFQVPYVTY (113 aa)) constitute a CUB domain. An interaction with the cholesterol-anchor of SHH region spans residues 860–869 (ILVVVPEIYL). C875 and C896 are joined by a disulfide. A glycan (N-linked (GlcNAc...) asparagine) is linked at N982.

In terms of assembly, interacts with SHH via the cholesterol anchor of the dually lipid-modified SHH (ShhNp). Interacts with PTCH1. Forms homooligomers and heterooligomers with SCUBE1 and SCUBE3. Interacts with VEGFR2. Post-translationally, N-glycosylated.

It is found in the secreted. Its subcellular location is the cell surface. Its function is as follows. Lipid-binding protein required for SHH long-range signaling by binding to the dually lipid-modified SHH (ShhNp) and by promoting ShhNp mobilization, solubilization and release from the cell membrane. Acts by enhancing the proteolytic processing (shedding) of the lipid-modified N- and C- terminal of ShhNp at the cell surface. Synergizes with DISP1 to cause an increase in SHH secretion. Probable cell surface coreceptor for VEGFR2 involved in VEGFR2-mediated angiogenesis. The chain is Signal peptide, CUB and EGF-like domain-containing protein 2 (scube2) from Danio rerio (Zebrafish).